The primary structure comprises 499 residues: Bifunctional purine biosynthesis protein PurH (499 aa).

The 144-residue stretch at 1 to 144 (MIKRALISVF…KNFKDVVVLT (144 aa)) folds into the MGS-like domain.

Belongs to the PurH family.

It carries out the reaction (6R)-10-formyltetrahydrofolate + 5-amino-1-(5-phospho-beta-D-ribosyl)imidazole-4-carboxamide = 5-formamido-1-(5-phospho-D-ribosyl)imidazole-4-carboxamide + (6S)-5,6,7,8-tetrahydrofolate. The catalysed reaction is IMP + H2O = 5-formamido-1-(5-phospho-D-ribosyl)imidazole-4-carboxamide. The protein operates within purine metabolism; IMP biosynthesis via de novo pathway; 5-formamido-1-(5-phospho-D-ribosyl)imidazole-4-carboxamide from 5-amino-1-(5-phospho-D-ribosyl)imidazole-4-carboxamide (10-formyl THF route): step 1/1. Its pathway is purine metabolism; IMP biosynthesis via de novo pathway; IMP from 5-formamido-1-(5-phospho-D-ribosyl)imidazole-4-carboxamide: step 1/1. The protein is Bifunctional purine biosynthesis protein PurH of Clostridium botulinum (strain Langeland / NCTC 10281 / Type F).